The following is a 206-amino-acid chain: Uridine kinase (206 aa).

11-18 (GGSASGKT) serves as a coordination point for ATP.

This sequence belongs to the uridine kinase family.

The protein resides in the cytoplasm. It carries out the reaction uridine + ATP = UMP + ADP + H(+). The catalysed reaction is cytidine + ATP = CMP + ADP + H(+). The protein operates within pyrimidine metabolism; CTP biosynthesis via salvage pathway; CTP from cytidine: step 1/3. It participates in pyrimidine metabolism; UMP biosynthesis via salvage pathway; UMP from uridine: step 1/1. The polypeptide is Uridine kinase (Lactococcus lactis subsp. lactis (strain IL1403) (Streptococcus lactis)).